Here is a 125-residue protein sequence, read N- to C-terminus: Holo-[acyl-carrier-protein] synthase (125 aa).

Residues Glu9 and Gln58 each coordinate Mg(2+).

Belongs to the P-Pant transferase superfamily. AcpS family. The cofactor is Mg(2+).

It localises to the cytoplasm. It carries out the reaction apo-[ACP] + CoA = holo-[ACP] + adenosine 3',5'-bisphosphate + H(+). Its function is as follows. Transfers the 4'-phosphopantetheine moiety from coenzyme A to a Ser of acyl-carrier-protein. This Rhodopirellula baltica (strain DSM 10527 / NCIMB 13988 / SH1) protein is Holo-[acyl-carrier-protein] synthase.